The following is a 246-amino-acid chain: tRNA (guanine-N(1)-)-methyltransferase (246 aa).

S-adenosyl-L-methionine is bound by residues Gly112 and 131–136; that span reads IGDYVL.

The protein belongs to the RNA methyltransferase TrmD family. In terms of assembly, homodimer.

The protein localises to the cytoplasm. It catalyses the reaction guanosine(37) in tRNA + S-adenosyl-L-methionine = N(1)-methylguanosine(37) in tRNA + S-adenosyl-L-homocysteine + H(+). Specifically methylates guanosine-37 in various tRNAs. In Thermosipho africanus (strain TCF52B), this protein is tRNA (guanine-N(1)-)-methyltransferase.